Reading from the N-terminus, the 544-residue chain is Lariat debranching enzyme (544 aa).

The a divalent metal cation site is built by C8, H10, D39, and N84. The lariat recognition loop stretch occupies residues 124–154 (SGIFKSHDYRKGHFECPPYNSSTIRSIYHVR). Position 128 is an N6-acetyllysine (K128). The a divalent metal cation site is built by H174, H226, and H228. Acidic residues predominate over residues 395–412 (EYEEQDDVESNDSGEDQS). Positions 395 to 463 (EYEEQDDVES…PSDQASEFSA (69 aa)) are disordered. Polar residues predominate over residues 413–425 (EYNTDTSALSSIN). The span at 429–439 (IMLDEEEDEDS) shows a compositional bias: acidic residues. A compositionally biased stretch (polar residues) spans 445-463 (SGMNTPSVEPSDQASEFSA). S464, S474, S478, S479, S485, S499, and S514 each carry phosphoserine. The tract at residues 476–544 (IVSSDDTVDS…AVDDDDDDAA (69 aa)) is disordered. Residues 512–522 (RLSDEHEPEQR) are compositionally biased toward basic and acidic residues.

This sequence belongs to the lariat debranching enzyme family. The cofactor is Fe(2+). Zn(2+) is required as a cofactor. Requires Mn(2+) as cofactor. As to expression, ubiquitously expressed, strongest expression in the spinal cord and brainstem.

Its subcellular location is the nucleus. With respect to regulation, active in presence of diverse metals including Fe(2+), Zn(2+), Mn(2+). Also activated by Ca(2+). Binds two metal cations in two adjacent alpha and beta metal-binding pockets. Cleaves the 2'-5' phosphodiester linkage at the branch point of excised lariat intron RNA and converts them into linear molecules that can be subsequently degraded, thereby facilitating ribonucleotide turnover. Linked to its role in pre-mRNA processing mechanism, may also participate in retrovirus replication via an RNA lariat intermediate in cDNA synthesis and have an antiviral cell-intrinsic defense function in the brainstem. The sequence is that of Lariat debranching enzyme (DBR1) from Homo sapiens (Human).